The sequence spans 539 residues: Prolyl 4-hydroxylase subunit alpha-2 (539 aa).

The N-terminal stretch at 1–16 is a signal peptide; it reads MRAVLLVCLLAGLAHA. Asn-110 carries N-linked (GlcNAc...) asparagine glycosylation. The 109-residue stretch at 401 to 509 folds into the Fe2OG dioxygenase domain; it reads TSEELQVANY…KWVSNKWIHE (109 aa). His-419, Asp-421, and His-490 together coordinate Fe cation. Lys-500 contacts 2-oxoglutarate.

It belongs to the P4HA family. In terms of assembly, heterotetramer of two alpha chains and two beta chains. Exist either as a phy-2(2)/pdi-2(2) tetramer or as a phy-1/phy-2/pdi-2(2) tetramer. The cofactor is Fe(2+). Requires L-ascorbate as cofactor.

The protein resides in the endoplasmic reticulum lumen. The enzyme catalyses L-prolyl-[collagen] + 2-oxoglutarate + O2 = trans-4-hydroxy-L-prolyl-[collagen] + succinate + CO2. In terms of biological role, catalyzes the post-translational formation of 4-hydroxyproline in -Xaa-Pro-Gly- sequences in collagens and other proteins. The sequence is that of Prolyl 4-hydroxylase subunit alpha-2 (phy-2) from Caenorhabditis elegans.